We begin with the raw amino-acid sequence, 369 residues long: Anhydro-N-acetylmuramic acid kinase (369 aa).

ATP is bound at residue 12-19; it reads GTSMDGVD.

It belongs to the anhydro-N-acetylmuramic acid kinase family.

The enzyme catalyses 1,6-anhydro-N-acetyl-beta-muramate + ATP + H2O = N-acetyl-D-muramate 6-phosphate + ADP + H(+). It functions in the pathway amino-sugar metabolism; 1,6-anhydro-N-acetylmuramate degradation. It participates in cell wall biogenesis; peptidoglycan recycling. In terms of biological role, catalyzes the specific phosphorylation of 1,6-anhydro-N-acetylmuramic acid (anhMurNAc) with the simultaneous cleavage of the 1,6-anhydro ring, generating MurNAc-6-P. Is required for the utilization of anhMurNAc either imported from the medium or derived from its own cell wall murein, and thus plays a role in cell wall recycling. In Shewanella sp. (strain W3-18-1), this protein is Anhydro-N-acetylmuramic acid kinase.